A 340-amino-acid chain; its full sequence is SH2 domain-containing adapter protein D (340 aa).

Disordered stretches follow at residues 1 to 77 (MAKW…PKHR), 94 to 186 (GGPG…QPWE), and 198 to 230 (VQFD…ERVD). Acidic residues predominate over residues 98-108 (EELEADTEYLD). Positions 171 to 186 (PQEDERPADEYDQPWE) are enriched in basic and acidic residues. The region spanning 240 to 335 (WFHGPLNRAD…AEHLALLYPV (96 aa)) is the SH2 domain.

Tyrosine phosphorylated by ABL.

In terms of biological role, may function as an adapter protein. The sequence is that of SH2 domain-containing adapter protein D (SHD) from Homo sapiens (Human).